A 148-amino-acid polypeptide reads, in one-letter code: NADH-quinone oxidoreductase subunit K 2 (148 aa).

3 helical membrane passes run 3-23 (LAYP…GVLA), 28-48 (ILVL…LVAF), and 64-84 (LFTI…VLAV). The interval 96–148 (LRDTAETDAAETLPDDAGTGPSGTDAAPNGDTTTATGRPGDNAGKNKKAEATR) is disordered.

The protein belongs to the complex I subunit 4L family. In terms of assembly, NDH-1 is composed of 14 different subunits. Subunits NuoA, H, J, K, L, M, N constitute the membrane sector of the complex.

It is found in the cell membrane. The enzyme catalyses a quinone + NADH + 5 H(+)(in) = a quinol + NAD(+) + 4 H(+)(out). Its function is as follows. NDH-1 shuttles electrons from NADH, via FMN and iron-sulfur (Fe-S) centers, to quinones in the respiratory chain. The immediate electron acceptor for the enzyme in this species is believed to be a menaquinone. Couples the redox reaction to proton translocation (for every two electrons transferred, four hydrogen ions are translocated across the cytoplasmic membrane), and thus conserves the redox energy in a proton gradient. In Streptomyces griseus subsp. griseus (strain JCM 4626 / CBS 651.72 / NBRC 13350 / KCC S-0626 / ISP 5235), this protein is NADH-quinone oxidoreductase subunit K 2.